Reading from the N-terminus, the 159-residue chain is MNLRRKNRLWVVCAVLAGLALTTALVLYALRANIDLFYTPGEILYGKRETQQLPAVGQRLRVGGMVMPGSVRRDPDSLKVNFSLYDAEGSVTVSYEGILPDLFREGQGVVVQGTLEKGNHVLAHEVLAKHDENYTPPEVEKAMQENHRRPQRADKDTSS.

The Cytoplasmic segment spans residues 1–8 (MNLRRKNR). A helical; Signal-anchor for type II membrane protein membrane pass occupies residues 9–29 (LWVVCAVLAGLALTTALVLYA). The Periplasmic segment spans residues 30-159 (LRANIDLFYT…PQRADKDTSS (130 aa)). Positions 129-159 (KHDENYTPPEVEKAMQENHRRPQRADKDTSS) are disordered. His-130 and Tyr-134 together coordinate heme.

It belongs to the CcmE/CycJ family.

It localises to the cell inner membrane. Functionally, heme chaperone required for the biogenesis of c-type cytochromes. Transiently binds heme delivered by CcmC and transfers the heme to apo-cytochromes in a process facilitated by CcmF and CcmH. In Salmonella paratyphi A (strain ATCC 9150 / SARB42), this protein is Cytochrome c-type biogenesis protein CcmE.